We begin with the raw amino-acid sequence, 129 residues long: Large ribosomal subunit protein bL12 (129 aa).

The protein belongs to the bacterial ribosomal protein bL12 family. In terms of assembly, homodimer. Part of the ribosomal stalk of the 50S ribosomal subunit. Forms a multimeric L10(L12)X complex, where L10 forms an elongated spine to which 2 to 4 L12 dimers bind in a sequential fashion. Binds GTP-bound translation factors.

In terms of biological role, forms part of the ribosomal stalk which helps the ribosome interact with GTP-bound translation factors. Is thus essential for accurate translation. This Thermosipho melanesiensis (strain DSM 12029 / CIP 104789 / BI429) protein is Large ribosomal subunit protein bL12.